Reading from the N-terminus, the 217-residue chain is DNA-binding transcriptional activator DevR/DosR (217 aa).

The 117-residue stretch at 3-119 (KVFLVDDHEV…ELARAVKDVG (117 aa)) folds into the Response regulatory domain. Asp-54 carries the 4-aspartylphosphate modification. Positions 143-208 (KQDPLSGLTD…QAAVFATELK (66 aa)) constitute an HTH luxR-type domain. Positions 167–186 (NKQIADRMFLAEKTVKNYVS) form a DNA-binding region, H-T-H motif. 2 positions are modified to phosphothreonine; by PknH: Thr-198 and Thr-205.

Homodimer. Interacts with NarL. In terms of processing, phosphorylated on Asp-54 by both DevS (DosS) and DosT. Phosphorylated on Thr-198 and Thr-205 by PknH, which enhances DevR dimerization. Aspartate phosphorylation and threonine phosphorylation cooperatively enhance DevR binding to DNA.

It is found in the cytoplasm. Its subcellular location is the host cytoplasmic vesicle. It localises to the host phagosome. Member of the two-component regulatory system DevR/DevS (also called DosR/DosS) involved in onset of the dormancy response. Regulates an approximately 48-member regulon. When phosphorylated binds and activates the promoter of DevR regulon genes in response to hypoxia. The presence of target DNA increases stability of phospho-DevR in vitro. Activates its own transcription under hypoxic but not aerobic conditions, probably binds as a dimer to tandem binding sites within the devR and hspX promoters. Accepts a phosphate group from DevS (DosS) and from DosT. Does not regulate transcription of dosT. The chain is DNA-binding transcriptional activator DevR/DosR from Mycobacterium tuberculosis (strain ATCC 25618 / H37Rv).